The primary structure comprises 408 residues: UPF0754 membrane protein Tery_3973 (408 aa).

Transmembrane regions (helical) follow at residues 4 to 24 (IWLY…TNDI) and 385 to 405 (IVNL…ILLV).

The protein belongs to the UPF0754 family.

The protein localises to the cell inner membrane. In Trichodesmium erythraeum (strain IMS101), this protein is UPF0754 membrane protein Tery_3973.